Here is a 464-residue protein sequence, read N- to C-terminus: Chromosomal replication initiator protein DnaA (464 aa).

A domain I, interacts with DnaA modulators region spans residues 1–74; that stretch reads MDAVGYEVFW…ERKFLELSGH (74 aa). Residues 74 to 117 form a domain II region; that stretch reads HPIKLLFAVKKGTPHGNTAPPKHVHTYLEKNSPAEVPSKKSFHP. Residues 118 to 341 are domain III, AAA+ region; that stretch reads DLNRDYTFEN…GALTKIIAFI (224 aa). Residues Gly-162, Gly-164, Lys-165, and Thr-166 each contribute to the ATP site. The tract at residues 342 to 464 is domain IV, binds dsDNA; it reads EVSGSITIDI…LKSKVQDSIR (123 aa).

It belongs to the DnaA family. In terms of assembly, oligomerizes as a right-handed, spiral filament on DNA at oriC.

It is found in the cytoplasm. Functionally, plays an essential role in the initiation and regulation of chromosomal replication. ATP-DnaA binds to the origin of replication (oriC) to initiate formation of the DNA replication initiation complex once per cell cycle. Binds the DnaA box (a 9 base pair repeat at the origin) and separates the double-stranded (ds)DNA. Forms a right-handed helical filament on oriC DNA; dsDNA binds to the exterior of the filament while single-stranded (ss)DNA is stabiized in the filament's interior. The ATP-DnaA-oriC complex binds and stabilizes one strand of the AT-rich DNA unwinding element (DUE), permitting loading of DNA polymerase. After initiation quickly degrades to an ADP-DnaA complex that is not apt for DNA replication. Binds acidic phospholipids. The polypeptide is Chromosomal replication initiator protein DnaA (Treponema pallidum (strain Nichols)).